A 424-amino-acid polypeptide reads, in one-letter code: UDP-N-acetylglucosamine 1-carboxyvinyltransferase (424 aa).

A phosphoenolpyruvate-binding site is contributed by 22 to 23 (KN). UDP-N-acetyl-alpha-D-glucosamine is bound at residue arginine 93. Catalysis depends on cysteine 117, which acts as the Proton donor. 2-(S-cysteinyl)pyruvic acid O-phosphothioketal is present on cysteine 117. UDP-N-acetyl-alpha-D-glucosamine contacts are provided by residues 122 to 126 (RPVDL), 162 to 165 (KVSV), aspartate 307, and isoleucine 329.

It belongs to the EPSP synthase family. MurA subfamily.

The protein resides in the cytoplasm. The catalysed reaction is phosphoenolpyruvate + UDP-N-acetyl-alpha-D-glucosamine = UDP-N-acetyl-3-O-(1-carboxyvinyl)-alpha-D-glucosamine + phosphate. It participates in cell wall biogenesis; peptidoglycan biosynthesis. Cell wall formation. Adds enolpyruvyl to UDP-N-acetylglucosamine. This chain is UDP-N-acetylglucosamine 1-carboxyvinyltransferase, found in Histophilus somni (strain 129Pt) (Haemophilus somnus).